Reading from the N-terminus, the 155-residue chain is Putative pre-16S rRNA nuclease (155 aa).

Belongs to the YqgF nuclease family.

It localises to the cytoplasm. Functionally, could be a nuclease involved in processing of the 5'-end of pre-16S rRNA. The protein is Putative pre-16S rRNA nuclease of Corynebacterium jeikeium (strain K411).